A 371-amino-acid chain; its full sequence is MQHGIKRVKLSEEAKRLKLEKDQIKIKNYRQLTDEIFELRANENYSDEALIKTNELLIINPEFYTIWNYRREILINNYSSSNDKDDQIYEDILNQDLNFVLVQLKKFPKCYWIWNHRRWLLFELVKLGKVNWKYEFGVVSKLLDLDQRNFHGWHYRRFVVKNMELECKNDTTLILKINLDEFNYTTLKIQKDFSNFSAWHNRTKLIPKIYNLIQQQQQQQQKDGKIFGDLPGIELFQNPILLLKNDLEMIKTGVYMSPEDTSVWLYLYWLLTDDLFTNAFKSHQQDYMNILHEQLQLINEVNEMEKEDTGQDNVGCLKSMIFINALIQNENNKPVLTEQVKSCLKQLAKIDPLRKNKYLDQLAGNAPIFHH.

5 PFTA repeats span residues 45–79 (YSDE…NNYS), 92–126 (ILNQ…ELVK), 131–165 (NWKY…NMEL), 177–211 (INLD…KIYN), and 242–276 (LLKN…DDLF).

The protein belongs to the protein prenyltransferase subunit alpha family. In terms of assembly, heterodimer of an alpha and a beta subunit.

The enzyme catalyses geranylgeranyl diphosphate + L-cysteinyl-[protein] = S-geranylgeranyl-L-cysteinyl-[protein] + diphosphate. Its function is as follows. Catalyzes the transfer of a geranyl-geranyl moiety from geranyl-geranyl pyrophosphate to proteins having the C-terminal -XCC or -XCXC, where both cysteines may become modified. Acts on YPT1 and SEC4. This is Geranylgeranyl transferase type-2 subunit alpha (BET4) from Candida albicans (Yeast).